A 905-amino-acid chain; its full sequence is Alanine--tRNA ligase (905 aa).

Positions 569, 573, 693, and 697 each coordinate Zn(2+).

This sequence belongs to the class-II aminoacyl-tRNA synthetase family. Zn(2+) serves as cofactor.

Its subcellular location is the cytoplasm. It carries out the reaction tRNA(Ala) + L-alanine + ATP = L-alanyl-tRNA(Ala) + AMP + diphosphate. In terms of biological role, catalyzes the attachment of alanine to tRNA(Ala) in a two-step reaction: alanine is first activated by ATP to form Ala-AMP and then transferred to the acceptor end of tRNA(Ala). Also edits incorrectly charged Ser-tRNA(Ala) and Gly-tRNA(Ala) via its editing domain. In Roseiflexus castenholzii (strain DSM 13941 / HLO8), this protein is Alanine--tRNA ligase.